Consider the following 570-residue polypeptide: Zinc finger protein 76 (570 aa).

Residue K24 forms a Glycyl lysine isopeptide (Lys-Gly) (interchain with G-Cter in SUMO2) linkage. A run of 3 repeats spans residues 34–45 (IQLEDGTTAYIH), 62–73 (VQLEDGSMAYIH), and 88–99 (VQLEDGSTAYIH). The segment at 34–99 (IQLEDGTTAY…LEDGSTAYIH (66 aa)) is 3 X 12 AA approximate repeats. C2H2-type zinc fingers lie at residues 165–189 (FRCG…ERAH), 195–219 (YRCD…VRTH), 225–249 (YKCP…VRTH), 255–279 (FQCP…VRTH), 285–309 (YTCP…VRIH), 315–339 (YVCT…HVVH), and 345–368 (YTCS…RSAH). The interval 365-401 (RSAHGELEATEESEQALYEQQQLEAASAAEESPPPKR) is disordered. Residues 379-395 (QALYEQQQLEAASAAEE) show a composition bias toward low complexity.

Belongs to the krueppel C2H2-type zinc-finger protein family. In terms of tissue distribution, testis.

It is found in the nucleus. Its function is as follows. May be involved in transcriptional regulation. This is Zinc finger protein 76 (ZNF76) from Homo sapiens (Human).